We begin with the raw amino-acid sequence, 317 residues long: 17-beta-hydroxysteroid dehydrogenase type 6 (317 aa).

An N-terminal signal peptide occupies residues Met1–Trp17. Phe33 to Leu57 is an NAD(+) binding site. An N-linked (GlcNAc...) asparagine glycan is attached at Asn161. Ser164 is a substrate binding site. The Proton acceptor role is filled by Tyr176.

The protein belongs to the short-chain dehydrogenases/reductases (SDR) family. In terms of tissue distribution, detected in prostate, liver and kidney.

The protein resides in the microsome membrane. It is found in the endoplasmic reticulum membrane. The catalysed reaction is all-trans-retinol--[retinol-binding protein] + NAD(+) = all-trans-retinal--[retinol-binding protein] + NADH + H(+). It catalyses the reaction all-trans-retinol + NAD(+) = all-trans-retinal + NADH + H(+). It carries out the reaction androsterone + NAD(+) = 5alpha-androstan-3,17-dione + NADH + H(+). The enzyme catalyses testosterone + NAD(+) = androst-4-ene-3,17-dione + NADH + H(+). The catalysed reaction is 5alpha-androstane-3alpha,17beta-diol + NAD(+) = 17beta-hydroxy-5alpha-androstan-3-one + NADH + H(+). It catalyses the reaction 17beta-estradiol + NAD(+) = estrone + NADH + H(+). It carries out the reaction 17beta-estradiol + NADP(+) = estrone + NADPH + H(+). The enzyme catalyses 3alpha-hydroxy-5alpha-pregnan-20-one + NAD(+) = 5alpha-pregnane-3,20-dione + NADH + H(+). The catalysed reaction is 5alpha-androstane-3beta,17beta-diol + NAD(+) = 17beta-hydroxy-5alpha-androstan-3-one + NADH + H(+). It catalyses the reaction 3beta-hydroxy-5alpha-androstan-17-one + NAD(+) = 5alpha-androstan-3,17-dione + NADH + H(+). Competitively inhibited by 9-cis-retinoic acid and 13-cis-retinoic acid. In terms of biological role, NAD-dependent oxidoreductase with broad substrate specificity that shows both oxidative and reductive activity (in vitro). Has retinol dehydrogenase activity towards all-trans-retinol (in vitro). Has 17-beta-hydroxysteroid dehydrogenase activity towards various steroids (in vitro). Converts 5-alpha-androstan-3-alpha,17-beta-diol to androsterone and estradiol to estrone (in vitro). Has 3-alpha-hydroxysteroid dehydrogenase activity towards androsterone (in vitro). The sequence is that of 17-beta-hydroxysteroid dehydrogenase type 6 (Hsd17b6) from Rattus norvegicus (Rat).